Reading from the N-terminus, the 360-residue chain is Phenylalanine--tRNA ligase alpha subunit (360 aa).

Residue glutamate 260 coordinates Mg(2+).

Belongs to the class-II aminoacyl-tRNA synthetase family. Phe-tRNA synthetase alpha subunit type 1 subfamily. Tetramer of two alpha and two beta subunits. Requires Mg(2+) as cofactor.

Its subcellular location is the cytoplasm. The enzyme catalyses tRNA(Phe) + L-phenylalanine + ATP = L-phenylalanyl-tRNA(Phe) + AMP + diphosphate + H(+). The protein is Phenylalanine--tRNA ligase alpha subunit of Rhizobium johnstonii (strain DSM 114642 / LMG 32736 / 3841) (Rhizobium leguminosarum bv. viciae).